Here is a 228-residue protein sequence, read N- to C-terminus: Large ribosomal subunit protein mL64 (228 aa).

Disordered regions lie at residues 20–44 (PRSR…DREN) and 186–228 (QRKR…KPSS). The stretch at 98 to 207 (TMQESLRVQQ…KKEARIAAMA (110 aa)) forms a coiled coil. Positions 184–200 (KQQRKRLKEERQRQKKE) match the Nuclear localization signal motif. Over residues 186–202 (QRKRLKEERQRQKKEAR) the composition is skewed to basic and acidic residues. Residues 212-228 (QDSAEAQDSAASGKPSS) show a composition bias toward low complexity.

The protein belongs to the mitochondrion-specific ribosomal protein mL64 family. As to quaternary structure, component of the mitochondrial ribosome large subunit (39S) which comprises a 16S rRNA and about 50 distinct proteins. Interacts with GADD45A, GADD45B and GADD45G. Interacts with NR4A1 via the NR4A1 AB domain. Interacts with ATAD3A and ATAD3B.

Its subcellular location is the mitochondrion. It is found in the nucleus. Functionally, acts as a negative regulator of G1 to S cell cycle phase progression by inhibiting cyclin-dependent kinases. Inhibitory effects are additive with GADD45 proteins but also occur in the absence of GADD45 proteins. Acts as a repressor of the orphan nuclear receptor NR4A1 by inhibiting AB domain-mediated transcriptional activity. May be involved in the hormone-mediated regulation of NR4A1 transcriptional activity. May play a role in mitochondrial protein synthesis. The protein is Large ribosomal subunit protein mL64 (Gadd45gip1) of Rattus norvegicus (Rat).